Reading from the N-terminus, the 643-residue chain is Conglutin alpha 2 (643 aa).

The N-terminal stretch at methionine 1–alanine 22 is a signal peptide. 2 disulfides stabilise this stretch: cysteine 31–cysteine 64 and cysteine 107–cysteine 464. In terms of domain architecture, Cupin type-1 1 spans leucine 36–asparagine 261. 3 disordered regions span residues threonine 110–glutamine 142, proline 190–glycine 243, and proline 285–glycine 458. Residues glutamine 207–glutamine 218 show a composition bias toward low complexity. 2 stretches are compositionally biased toward basic and acidic residues: residues histidine 228–lysine 237 and proline 298–glutamate 313. Over residues glutamate 314–glutamate 323 the composition is skewed to acidic residues. Composition is skewed to basic and acidic residues over residues proline 324–glutamine 333 and glutamine 357–threonine 369. Residues arginine 422–glycine 433 are compositionally biased toward basic residues. Residues glutamate 470–serine 616 form the Cupin type-1 2 domain. The span at asparagine 623–serine 632 shows a compositional bias: polar residues. The interval asparagine 623–alanine 643 is disordered. Positions serine 634–alanine 643 are enriched in basic and acidic residues.

Belongs to the 11S seed storage protein (globulins) family. Hexamer; each subunit is composed of an acidic and a basic chain derived from a single precursor and linked by a disulfide bond. Component of globulins complexes which accumulate in seeds.

Its function is as follows. Sulfur-rich seed storage protein. This protein found in the seeds of many leguminous and non-leguminous plants is the source of sulfur-containing amino acids in seed meals. The protein is Conglutin alpha 2 of Lupinus angustifolius (Narrow-leaved blue lupine).